Consider the following 1210-residue polypeptide: Disease resistance-like protein DSC2 (1210 aa).

The 165-residue stretch at Trp-59 to Leu-223 folds into the TIR domain. The active site involves Glu-134. The 271-residue stretch at Ile-241–His-511 folds into the NB-ARC domain. LRR repeat units lie at residues Ala-662–Leu-685, Lys-686–Thr-709, Leu-711–Thr-732, Ala-756–Asp-780, Met-783–Ser-804, Thr-805–Ser-828, Leu-830–Pro-848, Asp-849–Gln-873, and Leu-940–Gln-970.

Belongs to the disease resistance NB-LRR family. Interacts with DSC1.

The enzyme catalyses NAD(+) + H2O = ADP-D-ribose + nicotinamide + H(+). TIR-NB-LRR receptor-like protein involved in plant defense. Acts as a trigger of hypersensitive response (HR). Functions as a guard of CAMTA3, a negative regulator of immunity, during pathogen infection. The protein is Disease resistance-like protein DSC2 of Arabidopsis thaliana (Mouse-ear cress).